Here is a 313-residue protein sequence, read N- to C-terminus: Aspartate carbamoyltransferase catalytic subunit (313 aa).

Carbamoyl phosphate contacts are provided by Arg58 and Thr59. Lys86 contacts L-aspartate. Carbamoyl phosphate contacts are provided by Arg108, His136, and Gln139. Residues Arg169 and Arg223 each coordinate L-aspartate. Residues Gly264 and Pro265 each coordinate carbamoyl phosphate.

Belongs to the aspartate/ornithine carbamoyltransferase superfamily. ATCase family. As to quaternary structure, heterododecamer (2C3:3R2) of six catalytic PyrB chains organized as two trimers (C3), and six regulatory PyrI chains organized as three dimers (R2).

The catalysed reaction is carbamoyl phosphate + L-aspartate = N-carbamoyl-L-aspartate + phosphate + H(+). It functions in the pathway pyrimidine metabolism; UMP biosynthesis via de novo pathway; (S)-dihydroorotate from bicarbonate: step 2/3. Its function is as follows. Catalyzes the condensation of carbamoyl phosphate and aspartate to form carbamoyl aspartate and inorganic phosphate, the committed step in the de novo pyrimidine nucleotide biosynthesis pathway. The polypeptide is Aspartate carbamoyltransferase catalytic subunit (Halothermothrix orenii (strain H 168 / OCM 544 / DSM 9562)).